Reading from the N-terminus, the 229-residue chain is Protein fmp52-2, mitochondrial (229 aa).

Residues 1–44 constitute a mitochondrion transit peptide; sequence MTAAAVFGCTGAVGSQILATLLASDAFSSVATVSRKLPTAESPK.

The protein belongs to the FMP52 family.

The protein resides in the mitochondrion outer membrane. In Aspergillus terreus (strain NIH 2624 / FGSC A1156), this protein is Protein fmp52-2, mitochondrial (fmp522).